Consider the following 179-residue polypeptide: Large ribosomal subunit protein uL5 (179 aa).

Belongs to the universal ribosomal protein uL5 family. In terms of assembly, part of the 50S ribosomal subunit; part of the 5S rRNA/L5/L18/L25 subcomplex. Contacts the 5S rRNA and the P site tRNA. Forms a bridge to the 30S subunit in the 70S ribosome.

Functionally, this is one of the proteins that bind and probably mediate the attachment of the 5S RNA into the large ribosomal subunit, where it forms part of the central protuberance. In the 70S ribosome it contacts protein S13 of the 30S subunit (bridge B1b), connecting the 2 subunits; this bridge is implicated in subunit movement. Contacts the P site tRNA; the 5S rRNA and some of its associated proteins might help stabilize positioning of ribosome-bound tRNAs. The sequence is that of Large ribosomal subunit protein uL5 from Synechococcus sp. (strain CC9311).